Consider the following 126-residue polypeptide: MAILGLGTDIVEIARIEAVISRSGERLARRVLSDNEWAIWETHQQPVRFLAKRFAVKEAAAKAFGTGIRNGLAFNQFEVFNDELGKPRLRLWGEALTLAEKLGVAHMHVTLADERHYACATVILES.

Residues Asp9 and Glu58 each contribute to the Mg(2+) site.

Belongs to the P-Pant transferase superfamily. AcpS family. The cofactor is Mg(2+).

The protein localises to the cytoplasm. The catalysed reaction is apo-[ACP] + CoA = holo-[ACP] + adenosine 3',5'-bisphosphate + H(+). Its function is as follows. Transfers the 4'-phosphopantetheine moiety from coenzyme A to a Ser of acyl-carrier-protein. This Salmonella agona (strain SL483) protein is Holo-[acyl-carrier-protein] synthase.